Reading from the N-terminus, the 78-residue chain is Large ribosomal subunit protein bL28 (78 aa).

Positions 1–31 are disordered; that stretch reads MAAHCQVTGAEPGFGHSISHSHRRNKRRFDP.

It belongs to the bacterial ribosomal protein bL28 family.

This is Large ribosomal subunit protein bL28 from Pseudarthrobacter chlorophenolicus (strain ATCC 700700 / DSM 12829 / CIP 107037 / JCM 12360 / KCTC 9906 / NCIMB 13794 / A6) (Arthrobacter chlorophenolicus).